Reading from the N-terminus, the 301-residue chain is Ribosomal RNA small subunit methyltransferase H (301 aa).

Residues 25-27, D45, F72, D94, and Q101 each bind S-adenosyl-L-methionine; that span reads GGH.

Belongs to the methyltransferase superfamily. RsmH family.

The protein localises to the cytoplasm. The enzyme catalyses cytidine(1402) in 16S rRNA + S-adenosyl-L-methionine = N(4)-methylcytidine(1402) in 16S rRNA + S-adenosyl-L-homocysteine + H(+). Specifically methylates the N4 position of cytidine in position 1402 (C1402) of 16S rRNA. This Methylococcus capsulatus (strain ATCC 33009 / NCIMB 11132 / Bath) protein is Ribosomal RNA small subunit methyltransferase H.